A 366-amino-acid polypeptide reads, in one-letter code: Chorismate synthase (366 aa).

2 residues coordinate NADP(+): Arg-48 and Arg-54. FMN contacts are provided by residues 125 to 127, 238 to 239, Gly-278, 293 to 297, and Arg-319; these read RSS, NA, and KPTSS.

This sequence belongs to the chorismate synthase family. In terms of assembly, homotetramer. Requires FMNH2 as cofactor.

It catalyses the reaction 5-O-(1-carboxyvinyl)-3-phosphoshikimate = chorismate + phosphate. Its pathway is metabolic intermediate biosynthesis; chorismate biosynthesis; chorismate from D-erythrose 4-phosphate and phosphoenolpyruvate: step 7/7. Catalyzes the anti-1,4-elimination of the C-3 phosphate and the C-6 proR hydrogen from 5-enolpyruvylshikimate-3-phosphate (EPSP) to yield chorismate, which is the branch point compound that serves as the starting substrate for the three terminal pathways of aromatic amino acid biosynthesis. This reaction introduces a second double bond into the aromatic ring system. The chain is Chorismate synthase from Neisseria gonorrhoeae (strain NCCP11945).